The following is a 169-amino-acid chain: Large ribosomal subunit protein bL17 (169 aa).

The interval Glu-124–Ala-169 is disordered. Positions Asp-131–Lys-140 are enriched in basic residues. Residues Asp-150–Pro-161 show a composition bias toward low complexity.

It belongs to the bacterial ribosomal protein bL17 family. In terms of assembly, part of the 50S ribosomal subunit. Contacts protein L32.

The chain is Large ribosomal subunit protein bL17 from Chloroherpeton thalassium (strain ATCC 35110 / GB-78).